A 100-amino-acid polypeptide reads, in one-letter code: Glutamyl-tRNA(Gln) amidotransferase subunit C (100 aa).

This sequence belongs to the GatC family. In terms of assembly, heterotrimer of A, B and C subunits.

The catalysed reaction is L-glutamyl-tRNA(Gln) + L-glutamine + ATP + H2O = L-glutaminyl-tRNA(Gln) + L-glutamate + ADP + phosphate + H(+). The enzyme catalyses L-aspartyl-tRNA(Asn) + L-glutamine + ATP + H2O = L-asparaginyl-tRNA(Asn) + L-glutamate + ADP + phosphate + 2 H(+). In terms of biological role, allows the formation of correctly charged Asn-tRNA(Asn) or Gln-tRNA(Gln) through the transamidation of misacylated Asp-tRNA(Asn) or Glu-tRNA(Gln) in organisms which lack either or both of asparaginyl-tRNA or glutaminyl-tRNA synthetases. The reaction takes place in the presence of glutamine and ATP through an activated phospho-Asp-tRNA(Asn) or phospho-Glu-tRNA(Gln). This Rickettsia conorii (strain ATCC VR-613 / Malish 7) protein is Glutamyl-tRNA(Gln) amidotransferase subunit C.